The primary structure comprises 380 residues: Actinidain (380 aa).

The N-terminal stretch at 1-24 (MGLPKSFVSMSLLFFSTLLILSLA) is a signal peptide. Positions 25-126 (FNAKNLTQRT…NRYEPRVGQV (102 aa)) are cleaved as a propeptide — activation peptide. 3 N-linked (GlcNAc...) asparagine glycosylation sites follow: Asn-29, Asn-81, and Asn-111. Disulfide bonds link Cys-148–Cys-191, Cys-182–Cys-224, and Cys-282–Cys-332. Cys-151 is an active-site residue. Residues His-288 and Asn-308 contribute to the active site.

This sequence belongs to the peptidase C1 family. In terms of tissue distribution, fruit, present in small cells of the outer pericarp of mature fruit, but not large cells.

It catalyses the reaction Specificity close to that of papain.. Cysteine protease responsible for the cleavage of kiwellin into kissper and KiTH. The sequence is that of Actinidain from Actinidia deliciosa (Kiwi).